We begin with the raw amino-acid sequence, 159 residues long: Urease accessory protein UreE (159 aa).

Belongs to the UreE family.

It is found in the cytoplasm. Involved in urease metallocenter assembly. Binds nickel. Probably functions as a nickel donor during metallocenter assembly. The polypeptide is Urease accessory protein UreE (Acinetobacter baylyi (strain ATCC 33305 / BD413 / ADP1)).